Here is a 603-residue protein sequence, read N- to C-terminus: Protein SHORT-ROOT 2 (603 aa).

Disordered stretches follow at residues 11 to 58 (HHHH…HSHS) and 106 to 140 (DFSS…SSAG). The segment covering 31–44 (SYPSSRGSTSSPSS) has biased composition (low complexity). The span at 45–58 (HHTHNHTYYHHSHS) shows a compositional bias: basic residues. Residues 108–125 (SSSSSSRQFHSGTGAPSS) are compositionally biased toward low complexity. In terms of domain architecture, GRAS spans 179–602 (AAPSSSGRWA…QPVVWASAWK (424 aa)). The interval 186-249 (RWAAQLLMEC…LTTSGPRTLR (64 aa)) is leucine repeat I (LRI). The tract at residues 268–354 (ALKFQELSPW…DTPHLSITTV (87 aa)) is VHIID. The VHIID motif lies at 318-322 (LHILD). The interval 370 to 406 (EIGQRLEKFARLMGVPFSFRAVHHSGDLADLDLAALD) is leucine repeat II (LRII). A PFYRE region spans residues 416–514 (LAVNCVNALR…ERAVGRAIVD (99 aa)). The tract at residues 517–602 (SCPASQSAER…QPVVWASAWK (86 aa)) is SAW.

Belongs to the GRAS family. As to quaternary structure, does not interact with SCR1.

Its subcellular location is the nucleus. Its function is as follows. Putative transcription factor involved in asymmetric cell division. The chain is Protein SHORT-ROOT 2 (SHR2) from Oryza sativa subsp. japonica (Rice).